Here is a 507-residue protein sequence, read N- to C-terminus: RNA-splicing ligase RtcB homolog (507 aa).

D121, C124, H229, H261, and H355 together coordinate Mn(2+). 228 to 232 (NHYAE) provides a ligand contact to GMP. GMP-binding positions include 355–356 (HN), 404–407 (GGTM), S411, 430–433 (HGAG), and K506. The active-site GMP-histidine intermediate is H430.

It belongs to the RtcB family. As to quaternary structure, catalytic component of the tRNA-splicing ligase complex. The cofactor is Mn(2+).

The enzyme catalyses a 3'-end 3'-phospho-ribonucleotide-RNA + a 5'-end dephospho-ribonucleoside-RNA + GTP = a ribonucleotidyl-ribonucleotide-RNA + GMP + diphosphate. It catalyses the reaction a 3'-end 2',3'-cyclophospho-ribonucleotide-RNA + a 5'-end dephospho-ribonucleoside-RNA + GTP + H2O = a ribonucleotidyl-ribonucleotide-RNA + GMP + diphosphate + H(+). Functionally, catalytic subunit of the tRNA-splicing ligase complex that acts by directly joining spliced tRNA halves to mature-sized tRNAs by incorporating the precursor-derived splice junction phosphate into the mature tRNA as a canonical 3',5'-phosphodiester. May act as an RNA ligase with broad substrate specificity, and may function toward other RNAs. This chain is RNA-splicing ligase RtcB homolog, found in Plasmodium yoelii yoelii.